The following is a 117-amino-acid chain: Large ribosomal subunit protein uL18 (117 aa).

It belongs to the universal ribosomal protein uL18 family. Part of the 50S ribosomal subunit; part of the 5S rRNA/L5/L18/L25 subcomplex. Contacts the 5S and 23S rRNAs.

Functionally, this is one of the proteins that bind and probably mediate the attachment of the 5S RNA into the large ribosomal subunit, where it forms part of the central protuberance. This chain is Large ribosomal subunit protein uL18, found in Polynucleobacter asymbioticus (strain DSM 18221 / CIP 109841 / QLW-P1DMWA-1) (Polynucleobacter necessarius subsp. asymbioticus).